A 567-amino-acid polypeptide reads, in one-letter code: MEFFRFINALLGFPEEERKKKQSSGGTHNEHKPEQQTNAQHPSPQPIHHTPPSHSSETNNEHKPTPTPIRPAPPPPPPIIRHLKTHGSGSTTTHNEHESTPPSHYIRPMPIEHEPTPSPQPVTHNSSTNNEHESTPLPTPTPPNSGNEHKSTSAPTPPGLHRTPLPTPPIHHGIPTQIPPKREPEHHTHGSTNNEHESKRSPIPTPPGLHRIPTPTPPTHQTSPSHSSGGTHNEHESHPPTLHIPPSHHIRPMPIPPNPPIVREPTPTPQPTPIPTPPRLHRIPTPTPPRTPQPTPPPTHGSSSTNSSGSTNNEHKPTPKPIPIPPTPPPPPPHHGIPTQIPPKHESEHHDHGSSSTNSSSSTSNSSSGGTNNEHESTPSPQPMPIEHKPEQQTNAQNRITPIINLSQTKQKTTEKQTSCTIQNLEYAIQIGNLTQAKKILNNLSSNGQISQTKVNMANTVIEGLTKLKMQNQPISNVLSNLTNSFQQMYQNYIRTGKMPDNLIELANVINAITSLLPQYSASVPPNVKAEISRLTVLQQGGSTGTVPAVFFQATEEQRPVSNLIVQ.

Residues 7–393 (INALLGFPEE…MPIEHKPEQQ (387 aa)) are disordered. Residues 65–79 (TPTPIRPAPPPPPPI) are compositionally biased toward pro residues. Basic and acidic residues predominate over residues 180 to 200 (PKREPEHHTHGSTNNEHESKR). Residues 219–231 (THQTSPSHSSGGT) show a composition bias toward low complexity. 2 stretches are compositionally biased toward pro residues: residues 253–278 (MPIP…PTPP) and 285–299 (TPTP…PPPT). The segment covering 300–312 (HGSSSTNSSGSTN) has biased composition (low complexity). Residues 319–335 (PKPIPIPPTPPPPPPHH) show a composition bias toward pro residues. Residues 343–353 (PKHESEHHDHG) are compositionally biased toward basic and acidic residues. The segment covering 354 to 372 (SSSTNSSSSTSNSSSGGTN) has biased composition (low complexity).

Its subcellular location is the virion. The chain is Structural protein ORF567 from Acidianus two-tailed virus (ATV).